Here is a 532-residue protein sequence, read N- to C-terminus: 56 kDa type-specific antigen (532 aa).

The N-terminal stretch at Met-1 to Ala-22 is a signal peptide. The chain crosses the membrane as a helical span at residues Leu-67–Phe-87. 2 disordered regions span residues Lys-113–Thr-140 and Gln-400–Gly-426. Residues Glu-403 to Cys-413 are compositionally biased toward basic and acidic residues. A helical transmembrane segment spans residues Thr-480–Val-500.

The protein localises to the cell membrane. Functionally, may be an adherent factor for rickettsial adsorption to the host-cell surface and a determinant of virulence of individual rickettsial strain. It is the major outer membrane protein. The protein is 56 kDa type-specific antigen of Orientia tsutsugamushi (Rickettsia tsutsugamushi).